The primary structure comprises 396 residues: NADH-quinone oxidoreductase subunit D (396 aa).

The protein belongs to the complex I 49 kDa subunit family. As to quaternary structure, NDH-1 is composed of 14 different subunits. Subunits NuoB, C, D, E, F, and G constitute the peripheral sector of the complex.

The protein resides in the cell inner membrane. The enzyme catalyses a quinone + NADH + 5 H(+)(in) = a quinol + NAD(+) + 4 H(+)(out). Its function is as follows. NDH-1 shuttles electrons from NADH, via FMN and iron-sulfur (Fe-S) centers, to quinones in the respiratory chain. The immediate electron acceptor for the enzyme in this species is believed to be ubiquinone. Couples the redox reaction to proton translocation (for every two electrons transferred, four hydrogen ions are translocated across the cytoplasmic membrane), and thus conserves the redox energy in a proton gradient. The sequence is that of NADH-quinone oxidoreductase subunit D from Bartonella tribocorum (strain CIP 105476 / IBS 506).